The chain runs to 190 residues: Putative manganese efflux pump MntP (190 aa).

6 helical membrane passes run 3–23 (PISL…AALG), 41–61 (LIFG…GQVA), 69–89 (DHWI…YNGI), 105–125 (FWIL…VGVG), 133–153 (IVVA…IGVM), and 168–188 (IIGG…HLSA).

It belongs to the MntP (TC 9.B.29) family.

It localises to the cell inner membrane. Functionally, probably functions as a manganese efflux pump. The sequence is that of Putative manganese efflux pump MntP from Pseudomonas syringae pv. syringae (strain B728a).